The following is a 683-amino-acid chain: ATP-dependent zinc metalloprotease FtsH 2 (683 aa).

Over residues 1-12 (MADQTSQNDNQN) the composition is skewed to polar residues. The disordered stretch occupies residues 1–21 (MADQTSQNDNQNGSGLPGGGP). Residues 1–28 (MADQTSQNDNQNGSGLPGGGPSGTGRGR) are Cytoplasmic-facing. A helical transmembrane segment spans residues 29-49 (LIIWVIAGTLLALWAYSYWGM). Over 50–136 (GASGGERISY…VTKPESSFPW (87 aa)) the chain is Periplasmic. The chain crosses the membrane as a helical span at residues 137 to 157 (GLVIMGLLPVLLLFGVGYIFL). At 158–683 (RRMQSQGQGL…ASGSADASGS (526 aa)) the chain is on the cytoplasmic side. 228–235 (GPPGTGKT) is an ATP binding site. H450 serves as a coordination point for Zn(2+). Residue E451 is part of the active site. Positions 454 and 526 each coordinate Zn(2+). Positions 627–683 (VNGDTDEIGHMPTTNGAAASEENGSADDHEPDEATVIEEDGESGEGRASGSADASGS) are disordered. The segment covering 655–669 (HEPDEATVIEEDGES) has biased composition (acidic residues). Residues 672-683 (GRASGSADASGS) show a composition bias toward low complexity.

It in the central section; belongs to the AAA ATPase family. In the C-terminal section; belongs to the peptidase M41 family. As to quaternary structure, homohexamer. The cofactor is Zn(2+).

Its subcellular location is the cell inner membrane. Acts as a processive, ATP-dependent zinc metallopeptidase for both cytoplasmic and membrane proteins. Plays a role in the quality control of integral membrane proteins. This is ATP-dependent zinc metalloprotease FtsH 2 from Salinibacter ruber (strain M8).